The chain runs to 339 residues: DNA-directed RNA polymerase subunit alpha (339 aa).

An alpha N-terminal domain (alpha-NTD) region spans residues 1-233; the sequence is MVREEVAGST…DLFLPFLHAE (233 aa). Residues 264-339 form an alpha C-terminal domain (alpha-CTD) region; that stretch reads KKGIPLNCIF…IDLLKNKLSF (76 aa).

The protein belongs to the RNA polymerase alpha chain family. In plastids the minimal PEP RNA polymerase catalytic core is composed of four subunits: alpha, beta, beta', and beta''. When a (nuclear-encoded) sigma factor is associated with the core the holoenzyme is formed, which can initiate transcription.

It is found in the plastid. Its subcellular location is the chloroplast. It carries out the reaction RNA(n) + a ribonucleoside 5'-triphosphate = RNA(n+1) + diphosphate. Its function is as follows. DNA-dependent RNA polymerase catalyzes the transcription of DNA into RNA using the four ribonucleoside triphosphates as substrates. The chain is DNA-directed RNA polymerase subunit alpha from Heteranthelium piliferum (Elymus pilifer).